The primary structure comprises 330 residues: Dof zinc finger protein DOF2.4 (330 aa).

The segment covering 14 to 25 has biased composition (polar residues); sequence NWQQAPPSNYNH. The segment at 14–70 is disordered; it reads NWQQAPPSNYNHDGTGASANGGHVLRPQLQPQQQPQQQPHPNGSGGGGGGGGGSIRA. A compositionally biased stretch (low complexity) spans 40–55; the sequence is PQLQPQQQPQQQPHPN. The span at 56 to 68 shows a compositional bias: gly residues; it reads GSGGGGGGGGGSI. The Dof-type zinc-finger motif lies at 89-143; that stretch reads LKCPRCESTNTKFCYFNNYSLTQPRHFCKTCRRYWTRGGALRNVPVGGGCRRNRR. The Zn(2+) site is built by Cys-91, Cys-94, Cys-116, and Cys-119. Disordered stretches follow at residues 133–165 and 255–276; these read PVGG…SFSS and QQSS…SANG. Residues 146 to 165 show a composition bias toward low complexity; sequence SNSNNNNNSTATSNNTSFSS. Residues 265–276 show a composition bias toward polar residues; sequence EDSSNPNPSANG.

As to expression, specific to the vascular tissues. The PEAR proteins (e.g. DOF2.4, DOF5.1, DOF3.2, DOF1.1, DOF5.6 and DOF5.3) form a short-range concentration gradient that peaks at protophloem sieve elements (PSE).

It localises to the nucleus. The protein resides in the symplast. Functionally, transcription factor that binds specifically to a 5'-AA[AG]G-3' consensus core sequence. Probably involved in early processes for vascular development. The PEAR proteins (e.g. DOF2.4, DOF5.1, DOF3.2, DOF1.1, DOF5.6 and DOF5.3) activate gene expression that promotes radial growth of protophloem sieve elements. Triggers the transcription of HD-ZIP III genes, especially in the central domain of vascular tissue. In Arabidopsis thaliana (Mouse-ear cress), this protein is Dof zinc finger protein DOF2.4.